Reading from the N-terminus, the 840-residue chain is Recyclin-1 (840 aa).

One can recognise an F-box domain in the interval 1 to 48 (MDDLLKVPEIVTNIASYLSTVDYLSFQQVNKRVYAIINGKNDSKYWSL). The residue at position 409 (S409) is a Phosphoserine.

As to quaternary structure, interacts with SKP1.

The protein resides in the cytoplasm. It localises to the bud neck. It is found in the cell tip. Functionally, involved in recycling plasma membrane proteins internalized by endocytosis. Required for recycling of the v-SNARE SNC1. The sequence is that of Recyclin-1 (RCY1) from Saccharomyces cerevisiae (strain ATCC 204508 / S288c) (Baker's yeast).